Consider the following 610-residue polypeptide: Elongation factor 4 (610 aa).

In terms of domain architecture, tr-type G spans 11–193 (EKIRNFSIIA…QIVEKVPAPT (183 aa)). GTP contacts are provided by residues 23 to 28 (DHGKST) and 140 to 143 (NKID).

It belongs to the TRAFAC class translation factor GTPase superfamily. Classic translation factor GTPase family. LepA subfamily.

It localises to the cell membrane. It carries out the reaction GTP + H2O = GDP + phosphate + H(+). Required for accurate and efficient protein synthesis under certain stress conditions. May act as a fidelity factor of the translation reaction, by catalyzing a one-codon backward translocation of tRNAs on improperly translocated ribosomes. Back-translocation proceeds from a post-translocation (POST) complex to a pre-translocation (PRE) complex, thus giving elongation factor G a second chance to translocate the tRNAs correctly. Binds to ribosomes in a GTP-dependent manner. In Streptococcus pyogenes serotype M6 (strain ATCC BAA-946 / MGAS10394), this protein is Elongation factor 4.